The following is a 467-amino-acid chain: 3-isopropylmalate dehydratase large subunit (467 aa).

[4Fe-4S] cluster-binding residues include cysteine 347, cysteine 407, and cysteine 410.

It belongs to the aconitase/IPM isomerase family. LeuC type 1 subfamily. In terms of assembly, heterodimer of LeuC and LeuD. The cofactor is [4Fe-4S] cluster.

The catalysed reaction is (2R,3S)-3-isopropylmalate = (2S)-2-isopropylmalate. It participates in amino-acid biosynthesis; L-leucine biosynthesis; L-leucine from 3-methyl-2-oxobutanoate: step 2/4. Its function is as follows. Catalyzes the isomerization between 2-isopropylmalate and 3-isopropylmalate, via the formation of 2-isopropylmaleate. The polypeptide is 3-isopropylmalate dehydratase large subunit (Synechococcus sp. (strain JA-3-3Ab) (Cyanobacteria bacterium Yellowstone A-Prime)).